The primary structure comprises 115 residues: uncharacterized protein (115 aa).

A run of 2 helical transmembrane segments spans residues 15–35 and 52–72; these read FSTQ…EVLF and FDGV…YYSI.

It is found in the membrane. This is an uncharacterized protein from Saccharomyces cerevisiae (strain ATCC 204508 / S288c) (Baker's yeast).